A 338-amino-acid polypeptide reads, in one-letter code: Sesquiterpene synthase 2 (338 aa).

Mg(2+)-binding residues include D93, N228, S232, and E236. The DDXXD motif motif lies at 93 to 97; the sequence is DNISD. The short motif at 228–236 is the NSE/DTE motif element; the sequence is NDIFSYNVE. (2E,6E)-farnesyl diphosphate contacts are provided by R316 and Y317.

It belongs to the terpene synthase family. Mg(2+) is required as a cofactor.

It carries out the reaction (2E,6E)-farnesyl diphosphate = alpha-copaene + diphosphate. It catalyses the reaction (2E,6E)-farnesyl diphosphate = beta-copaene + diphosphate. The enzyme catalyses (2E,6E)-farnesyl diphosphate = alpha-muurolene + diphosphate. The catalysed reaction is (2E,6E)-farnesyl diphosphate = gamma-muurolene + diphosphate. It carries out the reaction (2E,6E)-farnesyl diphosphate = delta-cadinene + diphosphate. Its function is as follows. Terpene cyclase that catalyzes the cyclization of farnesyl diphosphate (FPP) to various sesquiterpenes, including alpha-copaene, beta-copaene, beta-elemene, alpha-muurolene, gamma-muurolene and delta-cadinene. This is Sesquiterpene synthase 2 from Postia placenta (strain ATCC 44394 / Madison 698-R) (Brown rot fungus).